Here is a 340-residue protein sequence, read N- to C-terminus: rRNA adenine N-6-methyltransferase (340 aa).

The segment covering 1–25 has biased composition (low complexity); it reads MAGPQDRPRGRGPSSGRPQRPVGGR. The interval 1-37 is disordered; that stretch reads MAGPQDRPRGRGPSSGRPQRPVGGRSQRDRDRRVLGQ. 6 residues coordinate S-adenosyl-L-methionine: Asn38, Leu40, Gly65, Glu86, Asp111, and Ala127. Residues 284–340 form a disordered region; sequence RGGAARGPGDQRGRRGRPGGGPRPDGRAGGGPRRDAGGRRTGDGRGGRPRPPRGGQA. Over residues 301 to 314 the composition is skewed to gly residues; that stretch reads PGGGPRPDGRAGGG. The segment covering 315–329 has biased composition (basic and acidic residues); the sequence is PRRDAGGRRTGDGRG.

This sequence belongs to the class I-like SAM-binding methyltransferase superfamily. rRNA adenine N(6)-methyltransferase family.

Involved in erythromycin resistance. This is rRNA adenine N-6-methyltransferase (ermA) from Aeromicrobium erythreum (strain ATCC 51598 / DSM 8599 / JCM 8359 / NBRC 15406 / NRRL B-3381).